The primary structure comprises 361 residues: Spermidine/putrescine import ATP-binding protein PotA (361 aa).

In terms of domain architecture, ABC transporter spans 4–234 (LEIKNVVKRF…PKNRFVADFL (231 aa)). 36 to 43 (GPSGCGKT) provides a ligand contact to ATP.

It belongs to the ABC transporter superfamily. Spermidine/putrescine importer (TC 3.A.1.11.1) family. The complex is composed of two ATP-binding proteins (PotA), two transmembrane proteins (PotB and PotC) and a solute-binding protein (PotD).

It is found in the cell inner membrane. The catalysed reaction is ATP + H2O + polyamine-[polyamine-binding protein]Side 1 = ADP + phosphate + polyamineSide 2 + [polyamine-binding protein]Side 1.. Functionally, part of the ABC transporter complex PotABCD involved in spermidine/putrescine import. Responsible for energy coupling to the transport system. The protein is Spermidine/putrescine import ATP-binding protein PotA of Chromobacterium violaceum (strain ATCC 12472 / DSM 30191 / JCM 1249 / CCUG 213 / NBRC 12614 / NCIMB 9131 / NCTC 9757 / MK).